The chain runs to 557 residues: Urocanate hydratase (557 aa).

The interval 1-20 (MSNPRHNEREVRSPRGDELN) is disordered. Residues 52–53 (GG), Gln130, 176–178 (GMG), Glu196, Arg201, 242–243 (NA), 263–267 (QTSAH), 273–274 (YL), and Tyr322 contribute to the NAD(+) site. Cys410 is a catalytic residue. Gly492 provides a ligand contact to NAD(+).

The protein belongs to the urocanase family. Requires NAD(+) as cofactor.

The protein resides in the cytoplasm. It catalyses the reaction 4-imidazolone-5-propanoate = trans-urocanate + H2O. Its pathway is amino-acid degradation; L-histidine degradation into L-glutamate; N-formimidoyl-L-glutamate from L-histidine: step 2/3. Functionally, catalyzes the conversion of urocanate to 4-imidazolone-5-propionate. The protein is Urocanate hydratase of Brucella abortus (strain S19).